Consider the following 241-residue polypeptide: Probable transcriptional regulatory protein Mpe_A1337 (241 aa).

The tract at residues 1-20 (MAGHSKWANIQHRKGRQDEK) is disordered.

The protein belongs to the TACO1 family.

The protein resides in the cytoplasm. The protein is Probable transcriptional regulatory protein Mpe_A1337 of Methylibium petroleiphilum (strain ATCC BAA-1232 / LMG 22953 / PM1).